Here is a 4558-residue protein sequence, read N- to C-terminus: Multifunctional-autoprocessing repeats-in-toxin (4558 aa).

A signal peptide spans 1–32; it reads MVFYLIPKRRVWLMGKPFWRSVEYFFTGNYSA. 39 RtxA repeats span residues 114-131, 134-151, 154-170, 174-197, 200-217, 220-237, 268-285, 288-304, 594-611, 614-630, 634-651, 654-668, 751-763, 769-781, 792-808, 811-826, 830-845, 851-865, 868-885, 887-901, 906-920, 925-942, 944-960, 982-994, 1001-1016, 1041-1053, 1077-1089, 1097-1112, 1120-1132, 1135-1152, 1155-1169, 1173-1189, 1194-1209, 1211-1227, 1230-1246, 1252-1266, 1268-1285, 1306-1323, and 1325-1342; these read GAAG…GDVS, GAAA…GNVT, GAGG…QGNL, GAGA…GDVT, GAGA…GNIT, GAGA…GDIT, GVGG…GDIH, GGGA…GNDF, GAGG…GNVH, GGGI…FGNT, GGGA…GDLT, GAGL…SEQG, AGGA…MGEG, MLGG…HISN, ALGG…GNTL, MGGG…DGTT, MVGG…NGDT, GVGN…GQTL, MGAA…TSIA, MIGA…GEGN, MGGL…GNGD, MVAE…MSVA, MLAK…GTTL, MIGQ…KVGN, MVGK…DGTS, GKAN…GDGL, AAAK…HVGD, AGKG…GTTV, GNVM…GTTI, AKGK…LGVN, WGQA…DGDR, AKGE…GQEV, GEAN…DDYT, AWGK…GQNV, AKGE…GDSF, KGNI…MQVT, AKGQ…LNVT, AWGK…LNVA, and MKGK…LNIN. Disordered stretches follow at residues 1623–1688, 1752–1779, and 1791–1890; these read HATQ…KEES, TLSD…QNRA, and DAEK…NADG. The span at 1625–1634 shows a compositional bias: polar residues; sequence TQNPAAQNAL. Over residues 1635-1654 the composition is skewed to basic and acidic residues; it reads SDKERAEADRQRLEQEKQKQ. A compositionally biased stretch (polar residues) spans 1660–1679; the sequence is GSQSQLESTDQQALENNGQA. The span at 1791-1815 shows a compositional bias: basic and acidic residues; that stretch reads DAEKRKADALAKGKDAQQAESDAHH. Polar residues predominate over residues 1879–1888; the sequence is HVNTDSQTNA. The region spanning 1988 to 2422 is the ACD domain; the sequence is VPGFKSHFAS…HAEQWAKITA (435 aa). 1999-2003 is an ATP binding site; it reads SIGIE. Residues E2003, E2065, and Q2149 each coordinate Mg(2+). R2255 provides a ligand contact to ATP. E2326 contributes to the Mg(2+) binding site. The tract at residues 2574–2658 is membrane localization region (MLD); sequence ELMSVTELLD…SLLNQVNTRL (85 aa). The tract at residues 2734–3098 is rho inactivation domain (RID); it reads EYGQTVADTI…HQVTDVLDAL (365 aa). The tract at residues 3195 to 3310 is ABH effector region; the sequence is VVLFLHGSGS…MPSMTKAITA (116 aa). The segment at 3404–3426 is disordered; sequence ASVDEDLDQQGLDTTSTKDQGIS. Residues 3414-3426 show a composition bias toward polar residues; sequence GLDTTSTKDQGIS. A Peptidase C80 domain is found at 3462–3646; sequence PTTDGGETRF…AENNKVSLSW (185 aa). Residues 3468-3470, 3495-3496, and R3526 each bind 1D-myo-inositol hexakisphosphate; these read ETR and KH. H3532 acts as the For cysteine protease activity in catalysis. S3577 contacts 1D-myo-inositol hexakisphosphate. The active-site Nucleophile; for cysteine protease activity is C3581. Residues 3610 to 3612, 3623 to 3624, K3636, and K3641 each bind 1D-myo-inositol hexakisphosphate; these read SVR and RK.

Mg(2+) serves as cofactor.

The protein localises to the secreted. It localises to the host cytoplasm. It is found in the host cytosol. The protein resides in the host cell membrane. The enzyme catalyses L-lysyl-/S-(2E,6E,10E)-geranylgeranyl-L-cysteinyl-[protein] + hexadecanoyl-CoA = N(6)-hexadecanoyl-L-lysyl-/S-(2E,6E,10E)-geranylgeranyl-L-cysteinyl-[protein] + CoA + H(+). It carries out the reaction L-lysyl-/S-(2E,6E,10E)-geranylgeranyl-L-cysteinyl-[protein] + dodecanoyl-CoA = N(6)-dodecanoyl-L-lysyl-/S-(2E,6E,10E)-geranylgeranyl-L-cysteinyl-[protein] + CoA + H(+). It catalyses the reaction L-lysyl-/S-(2E,6E,10E)-geranylgeranyl-L-cysteinyl-[protein] + decanoyl-CoA = N(6)-decanoyl-L-lysyl-/S-(2E,6E,10E)-geranylgeranyl-L-cysteinyl-[protein] + CoA + H(+). Protease activity is inhibited by N-ethylmaleimide but not other protease inhibitors. Protease activity is inhibited by aza-leucine epoxide. Protease activity is activated upon binding inositol hexakisphosphate (InsP6) via an allosteric mechanism: the active site is disordered or occluded in the absence of InsP6, protecting the protease active-site sulfhydryl until the toxin enters a eukaryotic cell. Upon processing at the Leu-3441-Ala-3442 site, the peptidase C80 domain is converted to a form with much reduced affinity for InsP6, but is reactivated for high affinity binding of InsP6 by cooperative binding of both a new substrate and InsP6. Reactivation allows cleavage at other sites, specifically at Leu residues between the effector domains. Functionally, precursor of a multifunctional toxin that causes destruction of the actin cytoskeleton by covalent cross-linking of actin and inactivation of Rho GTPases when translocated into the host cytoplasm. Upon translocation into the host cell, undergoes autoprocessing in cis mediated by the peptidase C80 domain (also named CPD domain): the protease activity is activated upon binding inositol hexakisphosphate (InsP6) present at the host cell membrane and delivers the Cysteine protease domain-containing toxin F3 chain to the host cytosol. The Cysteine protease domain-containing toxin F3 chain will then further cleave and release effector toxin chains that cause disassembly of the actin cytoskeleton and enhance V.cholerae colonization of the small intestine, possibly by facilitating evasion of phagocytic cells. Following autocatalytic cleavage in cis at the Leu-3441-Ala-3442 site, this chain mediates processing in trans to release other individual toxin chains to the host cytosol. Released effector toxin chains cause disassembly of the actin cytoskeleton and enhance V.cholerae colonization of the small intestine, possibly by facilitating evasion of phagocytic cells. Its function is as follows. Actin-directed toxin that catalyzes the covalent cross-linking of host cytoplasmic monomeric actin. Mediates the cross-link between 'Lys-50' of one monomer and 'Glu-270' of another actin monomer, resulting in formation of highly toxic actin oligomers that cause cell rounding. The toxin can be highly efficient at very low concentrations by acting on formin homology family proteins: toxic actin oligomers bind with high affinity to formins and adversely affect both nucleation and elongation abilities of formins, causing their potent inhibition in both profilin-dependent and independent manners. Acts as an acid--amino-acid ligase that transfers the gamma-phosphoryl group of ATP to the 'Glu-270' actin residue, resulting in the formation of an activated acyl phosphate intermediate. This intermediate is further hydrolyzed and the energy of hydrolysis is utilized for the formation of the amide bond between actin subunits. In terms of biological role, N-epsilon-fatty acyltransferase that mediates lysine-palmitoylation of host Rho GTPase proteins, with a strong preference for host Rac1. After delivery to the host cytosol, localizes to the host cell membrane where it palmitoylates host Rho GTPase proteins, resulting in loss of all active GTP-bound Rho and subsequent actin depolymerization. Prenylation of host Rac1 at the C-terminus is required for lysine-palmitoylation. Functionally, indirectly activates the small GTPase CDC42. This is Multifunctional-autoprocessing repeats-in-toxin from Vibrio cholerae serotype O1 (strain ATCC 39315 / El Tor Inaba N16961).